Consider the following 166-residue polypeptide: NAD(P)H-quinone oxidoreductase subunit I, chloroplastic (166 aa).

4Fe-4S ferredoxin-type domains follow at residues glycine 55–lysine 84 and leucine 95–glutamate 124. 8 residues coordinate [4Fe-4S] cluster: cysteine 64, cysteine 67, cysteine 70, cysteine 74, cysteine 104, cysteine 107, cysteine 110, and cysteine 114.

This sequence belongs to the complex I 23 kDa subunit family. In terms of assembly, NDH is composed of at least 16 different subunits, 5 of which are encoded in the nucleus. [4Fe-4S] cluster serves as cofactor.

The protein localises to the plastid. The protein resides in the chloroplast thylakoid membrane. It catalyses the reaction a plastoquinone + NADH + (n+1) H(+)(in) = a plastoquinol + NAD(+) + n H(+)(out). The enzyme catalyses a plastoquinone + NADPH + (n+1) H(+)(in) = a plastoquinol + NADP(+) + n H(+)(out). Functionally, NDH shuttles electrons from NAD(P)H:plastoquinone, via FMN and iron-sulfur (Fe-S) centers, to quinones in the photosynthetic chain and possibly in a chloroplast respiratory chain. The immediate electron acceptor for the enzyme in this species is believed to be plastoquinone. Couples the redox reaction to proton translocation, and thus conserves the redox energy in a proton gradient. The polypeptide is NAD(P)H-quinone oxidoreductase subunit I, chloroplastic (Picradeniopsis absinthifolia (Hairyseed bahia)).